A 362-amino-acid chain; its full sequence is Guanine nucleotide-binding protein alpha-10 subunit (362 aa).

A lipid anchor (N-myristoyl glycine) is attached at G2. C4 carries the S-palmitoyl cysteine lipid modification. A G-alpha domain is found at 35–362 (LEQSVLLIGP…QENLKDTGMI (328 aa)). The G1 motif stretch occupies residues 38–51 (SVLLIGPGESGKST). Residues 43–50 (GPGESGKS), 184–190 (VRIRVPT), 209–213 (DCGGQ), 278–281 (NKID), and A335 each bind GTP. Mg(2+) contacts are provided by S50 and T190. Residues 182 to 190 (DIVRIRVPT) are G2 motif. The segment at 205–214 (LSVIDCGGQR) is G3 motif. A G4 motif region spans residues 274 to 281 (ILFLNKID). A G5 motif region spans residues 333–337 (TCAIS).

Belongs to the G-alpha family. As to quaternary structure, g proteins are composed of 3 units; alpha, beta and gamma. The alpha chain contains the guanine nucleotide binding site.

Guanine nucleotide-binding proteins (G proteins) are involved as modulators or transducers in various transmembrane signaling systems. This chain is Guanine nucleotide-binding protein alpha-10 subunit (gpa-10), found in Caenorhabditis briggsae.